A 400-amino-acid polypeptide reads, in one-letter code: MGRAKKVVLAYSGGVDTSVCIPYLKQEWGVEEVITLAADLGQGDELEPIREKALKSGASESLVADVKDSFVKDYAFGAIQANALYENRYPLGTALARPLIAKILVETAEKYGADAIAHGCTGKGNDQVRFDVSVTALNPNLKILAPAREWGMSREETIAYGEKFGIPSPVKKSSPYSIDKNLLGRSIEAGLLEDPSFEPPEEIYEMTKAIADTPNEPEYIKIGFHGGIPTTLNGIAKQPVELIEELNQLVGNHGVGRIDMIENRLVGIKSREIYESPAMLVLIQAHRDLESLTLTADVTHYKRGIEETYSQIVYNGLWYSPLKVALDAFIQKTQERVSGTVRVKLFKGNSTIVGRSSDSSLYTPDLATYGADDQFDHKAAEGFIYVWGLPTRIWSRQIKS.

ATP is bound by residues 10–18 (AYSGGVDTS) and alanine 38. Tyrosine 89 serves as a coordination point for L-citrulline. Glycine 119 contacts ATP. L-aspartate contacts are provided by threonine 121, asparagine 125, and aspartate 126. Residue asparagine 125 participates in L-citrulline binding. L-citrulline-binding residues include arginine 129, serine 177, serine 186, glutamate 262, and tyrosine 274.

This sequence belongs to the argininosuccinate synthase family. Type 1 subfamily. As to quaternary structure, homotetramer.

It is found in the cytoplasm. The enzyme catalyses L-citrulline + L-aspartate + ATP = 2-(N(omega)-L-arginino)succinate + AMP + diphosphate + H(+). It functions in the pathway amino-acid biosynthesis; L-arginine biosynthesis; L-arginine from L-ornithine and carbamoyl phosphate: step 2/3. This chain is Argininosuccinate synthase, found in Nostoc punctiforme (strain ATCC 29133 / PCC 73102).